The following is a 300-amino-acid chain: Ubiquitin carboxyl-terminal hydrolase 2 (300 aa).

Residues 2–220 (SWTTIESDAG…IRFNLMVICK (219 aa)) enclose the UCH catalytic domain. Cysteine 83 serves as the catalytic Nucleophile. The active-site Proton donor is histidine 159. In terms of domain architecture, ULD spans 261-290 (NFVGLFVELSKLLVKDRIDKNTWNSTLETA).

It belongs to the peptidase C12 family. Component of the 26S proteasome. Interacts with rpn10.

It localises to the nucleus. It carries out the reaction Thiol-dependent hydrolysis of ester, thioester, amide, peptide and isopeptide bonds formed by the C-terminal Gly of ubiquitin (a 76-residue protein attached to proteins as an intracellular targeting signal).. In terms of biological role, ubiquitin-protein hydrolase is involved both in the processing of ubiquitin precursors and of ubiquitinated proteins. This enzyme is a thiol protease that recognizes and hydrolyzes a peptide bond at the C-terminal glycine of ubiquitin. In Schizosaccharomyces pombe (strain 972 / ATCC 24843) (Fission yeast), this protein is Ubiquitin carboxyl-terminal hydrolase 2 (uch2).